Reading from the N-terminus, the 289-residue chain is Nodulation protein NolT (289 aa).

An N-terminal signal peptide occupies residues methionine 1–serine 33. Cysteine 34 is lipidated: N-palmitoyl cysteine. Cysteine 34 is lipidated: S-diacylglycerol cysteine. A helical transmembrane segment spans residues valine 233–leucine 253.

Belongs to the YscJ lipoprotein family.

It localises to the cell outer membrane. Regulates cultivar-specific nodulation of soybean. The sequence is that of Nodulation protein NolT (nolT) from Rhizobium fredii (Sinorhizobium fredii).